Reading from the N-terminus, the 333-residue chain is SKIGINGFGRIGRLVLRAALEMGAQVVAVNDPFIALEYMVYMFKYDSTHGMFKGEVKAEDGALVVDGKKITVFNEMKPENIPWSKAGAEYIVESTGVFTTIEKASAHFKGGAKKVIISAPSADAPMFVCGVNLEKYSKDMKVVSNASCTTNCLAPVAKVLHENFEIVEGLMTTVHAVTATQKTVDGPSAKDWRGGRGAAQNIIPSSTGAAKAVGKVIPELDGKLTGMAFRVPTPNVSVVDLTVRLGKECSYDDIKAAMKAASEGPLQGVLGYTEDDVVSCDFTGDNRSSIFDAKAGIQLSKTFVKVVSWYDNEFGYSQRVIDLIKHMQKVDSA.

N-acetylserine is present on serine 1. NAD(+) contacts are provided by residues 10 to 11, aspartate 31, and methionine 76; that span reads RI. D-glyceraldehyde 3-phosphate is bound by residues 147–149, threonine 178, 207–208, and arginine 230; these read SCT and TG. Residue cysteine 148 is the Nucleophile of the active site. Asparagine 312 provides a ligand contact to NAD(+).

It belongs to the glyceraldehyde-3-phosphate dehydrogenase family. As to quaternary structure, homotetramer.

It localises to the cytoplasm. The catalysed reaction is D-glyceraldehyde 3-phosphate + phosphate + NAD(+) = (2R)-3-phospho-glyceroyl phosphate + NADH + H(+). It functions in the pathway carbohydrate degradation; glycolysis; pyruvate from D-glyceraldehyde 3-phosphate: step 1/5. The sequence is that of Glyceraldehyde-3-phosphate dehydrogenase from Panulirus versicolor (Painted spiny lobster).